The primary structure comprises 122 residues: Large ribosomal subunit protein uL14 (122 aa).

The protein belongs to the universal ribosomal protein uL14 family. In terms of assembly, part of the 50S ribosomal subunit. Forms a cluster with proteins L3 and L19. In the 70S ribosome, L14 and L19 interact and together make contacts with the 16S rRNA in bridges B5 and B8.

Functionally, binds to 23S rRNA. Forms part of two intersubunit bridges in the 70S ribosome. This Rhizobium johnstonii (strain DSM 114642 / LMG 32736 / 3841) (Rhizobium leguminosarum bv. viciae) protein is Large ribosomal subunit protein uL14.